A 411-amino-acid polypeptide reads, in one-letter code: Serpin A12 (411 aa).

An N-terminal signal peptide occupies residues methionine 1–leucine 20. Residues asparagine 92 and asparagine 267 are each glycosylated (N-linked (GlcNAc...) asparagine). Residues glycine 364–arginine 382 form a reactive center loop region.

It belongs to the serpin family. Forms a stable complex with KLK7. Glycosylation slightly decreases affinity for heparin, but otherwise has no significant effect on KLK7 inhibitory activity or thermal stability of the protein. Expressed in visceral adipose tissues.

The protein resides in the secreted. Its activity is regulated as follows. Inhibition of KLK7 is enhanced by heparin. Its function is as follows. Adipokine that modulates insulin action by specifically inhibiting its target protease KLK7 in white adipose tissues. The chain is Serpin A12 (Serpina12) from Rattus norvegicus (Rat).